Reading from the N-terminus, the 581-residue chain is Proline--tRNA ligase (581 aa).

This sequence belongs to the class-II aminoacyl-tRNA synthetase family. ProS type 1 subfamily. As to quaternary structure, homodimer.

Its subcellular location is the cytoplasm. It carries out the reaction tRNA(Pro) + L-proline + ATP = L-prolyl-tRNA(Pro) + AMP + diphosphate. Its function is as follows. Catalyzes the attachment of proline to tRNA(Pro) in a two-step reaction: proline is first activated by ATP to form Pro-AMP and then transferred to the acceptor end of tRNA(Pro). As ProRS can inadvertently accommodate and process non-cognate amino acids such as alanine and cysteine, to avoid such errors it has two additional distinct editing activities against alanine. One activity is designated as 'pretransfer' editing and involves the tRNA(Pro)-independent hydrolysis of activated Ala-AMP. The other activity is designated 'posttransfer' editing and involves deacylation of mischarged Ala-tRNA(Pro). The misacylated Cys-tRNA(Pro) is not edited by ProRS. The protein is Proline--tRNA ligase of Paracidovorax citrulli (strain AAC00-1) (Acidovorax citrulli).